A 1011-amino-acid polypeptide reads, in one-letter code: PE-PGRS family protein PE_PGRS30 (1011 aa).

Positions 1 to 93 (MSFLLVEPDL…AAAYTGAEAA (93 aa)) constitute a PE domain. Residues 130-696 (SNAGGNGGPG…GGTGGTGGVL (567 aa)) form a PGRS domain region. Over residues 595 to 696 (GGAGGTGGDH…GGTGGTGGVL (102 aa)) the composition is skewed to gly residues. A disordered region spans residues 595-701 (GGAGGTGGDH…TGGVLFGQSG (107 aa)). Positions 697-1011 (FGQSGSSGPP…PTQLAQAIAP (315 aa)) are C-terminal domain.

Belongs to the mycobacterial PE family. PGRS subfamily.

It is found in the secreted. The protein localises to the cell wall. It localises to the cell surface. Its function is as follows. Mediates suppression of pro-inflammatory immune response in macrophages via modulation of host cytokine response. Required for full virulence. Involved in inhibition of phago-lysosome fusion. This Mycobacterium tuberculosis (strain ATCC 25618 / H37Rv) protein is PE-PGRS family protein PE_PGRS30.